The sequence spans 293 residues: Glutamyl-Q tRNA(Asp) synthetase (293 aa).

Residues 9–13 (RFAPS) and E45 contribute to the L-glutamate site. Residues 12–22 (PSPSGSLHFGS) carry the 'HIGH' region motif. Positions 101, 103, 115, and 119 each coordinate Zn(2+). Y172 and R190 together coordinate L-glutamate. The 'KMSKS' region motif lies at 228–232 (KLSKQ). Residue K231 participates in ATP binding.

Belongs to the class-I aminoacyl-tRNA synthetase family. GluQ subfamily. It depends on Zn(2+) as a cofactor.

Its function is as follows. Catalyzes the tRNA-independent activation of glutamate in presence of ATP and the subsequent transfer of glutamate onto a tRNA(Asp). Glutamate is transferred on the 2-amino-5-(4,5-dihydroxy-2-cyclopenten-1-yl) moiety of the queuosine in the wobble position of the QUC anticodon. This Shewanella frigidimarina (strain NCIMB 400) protein is Glutamyl-Q tRNA(Asp) synthetase.